Reading from the N-terminus, the 199-residue chain is Probable adenine phosphoribosyltransferase (199 aa).

The protein belongs to the purine/pyrimidine phosphoribosyltransferase family. As to quaternary structure, homodimer.

The protein resides in the cytoplasm. The enzyme catalyses AMP + diphosphate = 5-phospho-alpha-D-ribose 1-diphosphate + adenine. The protein operates within purine metabolism; AMP biosynthesis via salvage pathway; AMP from adenine: step 1/1. In terms of biological role, catalyzes a salvage reaction resulting in the formation of AMP, that is energically less costly than de novo synthesis. The sequence is that of Probable adenine phosphoribosyltransferase (aprt) from Dictyostelium discoideum (Social amoeba).